The following is a 338-amino-acid chain: CRISPR system Cmr subunit Cmr1-1 (338 aa).

The protein belongs to the CRISPR system Cmr1 family. Part of the type III-B Cmr ribonucleoprotein (RNP) complex, an elongated RNP with Cmr2 and Cmr3 as the base, with Cmr4 and Cmr5 forming a helical core along the mature crRNA (39 or 45 nt in length), while the complex is capped by Cmr6 and Cmr1. The 5' end of the crRNA is bound to Cmr2 and Cmr3, while Cmr6 and a Cmr1 subunit (Cmr1-1 or Cmr1-2) cap the 3' end of the crRNA. The target RNA lies antiparallel to the crRNA, with its 5' end near Cmr1 and Cmr6 and its 3' end near Cmr2 and Cmr3; major target cleavage occurs nears the junction of Cmr1/Cmr6 and Cmr4/Cmr, with minor cleavage occurring at 6 nt intervals which coincide with the proposed spacing of Cmr4 subunits.

It localises to the cytoplasm. Functionally, CRISPR (clustered regularly interspaced short palindromic repeat), is an adaptive immune system that provides protection against mobile genetic elements (viruses, transposable elements and conjugative plasmids). CRISPR clusters contain sequences complementary to antecedent mobile elements and target invading nucleic acids. CRISPR clusters are transcribed and processed into CRISPR RNA (crRNA), formerly called psiRNA (prokaryotic silencing) in this organism. Part of the Cmr ribonucleoprotein complex which has divalent cation-dependent endoribonuclease activity specific for ssRNA complementary to the crRNA (target RNA), generating 5' hydroxy- and 3' phosphate or 2'-3' cyclic phosphate termini. Cmr4 is probably the subunit that cleaves target RNA. Cmr complex does not cleave ssDNA complementary to the crRNA. Cleavage of invading RNA is guided by the crRNA; substrate cleavage occurs a fixed distance (14 nt) from the 3' end of the crRNA. In vitro reconstitution shows Cmr1-2 and Cmr5 are not absolutely necessary for target cleavage. This chain is CRISPR system Cmr subunit Cmr1-1, found in Pyrococcus furiosus (strain ATCC 43587 / DSM 3638 / JCM 8422 / Vc1).